We begin with the raw amino-acid sequence, 486 residues long: Cardiolipin synthase A (486 aa).

Transmembrane regions (helical) follow at residues 3–23 (TFYT…IAGV) and 38–58 (MAWL…YLSF). 2 consecutive PLD phosphodiesterase domains span residues 219–246 (MDLR…VDPR) and 399–426 (KDGL…DMRS). Catalysis depends on residues histidine 224, lysine 226, aspartate 231, histidine 404, lysine 406, and aspartate 411.

Belongs to the phospholipase D family. Cardiolipin synthase subfamily. ClsA sub-subfamily.

The protein localises to the cell inner membrane. It catalyses the reaction 2 a 1,2-diacyl-sn-glycero-3-phospho-(1'-sn-glycerol) = a cardiolipin + glycerol. Catalyzes the reversible phosphatidyl group transfer from one phosphatidylglycerol molecule to another to form cardiolipin (CL) (diphosphatidylglycerol) and glycerol. In Pectobacterium atrosepticum (strain SCRI 1043 / ATCC BAA-672) (Erwinia carotovora subsp. atroseptica), this protein is Cardiolipin synthase A.